We begin with the raw amino-acid sequence, 217 residues long: Putative N-acetylmuramoyl-L-alanine amidase (217 aa).

In terms of domain architecture, MurNAc-LAA spans 3-206; sequence IAIDAGHGGQ…ISKSISIALK (204 aa).

The protein belongs to the N-acetylmuramoyl-L-alanine amidase 3 family.

It localises to the secreted. The catalysed reaction is Hydrolyzes the link between N-acetylmuramoyl residues and L-amino acid residues in certain cell-wall glycopeptides.. Its function is as follows. Cell-wall hydrolase involved in septum cleavage during cell division. This is Putative N-acetylmuramoyl-L-alanine amidase (amiB) from Buchnera aphidicola subsp. Baizongia pistaciae (strain Bp).